A 115-amino-acid chain; its full sequence is Large ribosomal subunit protein bL19 (115 aa).

It belongs to the bacterial ribosomal protein bL19 family.

In terms of biological role, this protein is located at the 30S-50S ribosomal subunit interface and may play a role in the structure and function of the aminoacyl-tRNA binding site. The sequence is that of Large ribosomal subunit protein bL19 from Nitrosococcus oceani (strain ATCC 19707 / BCRC 17464 / JCM 30415 / NCIMB 11848 / C-107).